Consider the following 349-residue polypeptide: Palmitoyltransferase PFA5 (349 aa).

2 helical membrane-spanning segments follow: residues 19–39 (LIPF…CHQF) and 57–77 (LIIV…LMLV). The DHHC domain maps to 126–176 (IWCSNCQSLKMSRTHHSTKVGYCVPRFDHYCVWIGTVLGRLNYKLFVQFTF). C156 acts as the S-palmitoyl cysteine intermediate in catalysis. 2 helical membrane passes run 170–190 (LFVQ…ISIA) and 204–224 (VYAV…LFLT).

The protein belongs to the DHHC palmitoyltransferase family. PFA5 subfamily.

The protein resides in the membrane. It carries out the reaction L-cysteinyl-[protein] + hexadecanoyl-CoA = S-hexadecanoyl-L-cysteinyl-[protein] + CoA. This is Palmitoyltransferase PFA5 (PFA5) from Kluyveromyces lactis (strain ATCC 8585 / CBS 2359 / DSM 70799 / NBRC 1267 / NRRL Y-1140 / WM37) (Yeast).